Consider the following 468-residue polypeptide: Serine--tRNA ligase (468 aa).

272–274 (TAE) contacts L-serine. 303–305 (RAE) contributes to the ATP binding site. Glu326 lines the L-serine pocket. 390–393 (EISS) is a binding site for ATP. Ser426 is an L-serine binding site.

It belongs to the class-II aminoacyl-tRNA synthetase family. Type-1 seryl-tRNA synthetase subfamily. In terms of assembly, homodimer. The tRNA molecule binds across the dimer.

Its subcellular location is the cytoplasm. The catalysed reaction is tRNA(Ser) + L-serine + ATP = L-seryl-tRNA(Ser) + AMP + diphosphate + H(+). The enzyme catalyses tRNA(Sec) + L-serine + ATP = L-seryl-tRNA(Sec) + AMP + diphosphate + H(+). The protein operates within aminoacyl-tRNA biosynthesis; selenocysteinyl-tRNA(Sec) biosynthesis; L-seryl-tRNA(Sec) from L-serine and tRNA(Sec): step 1/1. In terms of biological role, catalyzes the attachment of serine to tRNA(Ser). Is also able to aminoacylate tRNA(Sec) with serine, to form the misacylated tRNA L-seryl-tRNA(Sec), which will be further converted into selenocysteinyl-tRNA(Sec). In Xanthobacter autotrophicus (strain ATCC BAA-1158 / Py2), this protein is Serine--tRNA ligase.